Consider the following 303-residue polypeptide: Cytosolic Fe-S cluster assembly factor CFD1 (303 aa).

15–22 (GKGGVGKS) lines the ATP pocket. [4Fe-4S] cluster-binding residues include C199 and C202.

Belongs to the Mrp/NBP35 ATP-binding proteins family. NUBP2/CFD1 subfamily. As to quaternary structure, heterotetramer of 2 NBP35 and 2 CFD1 chains. Requires [4Fe-4S] cluster as cofactor.

Its subcellular location is the cytoplasm. Functionally, component of the cytosolic iron-sulfur (Fe/S) protein assembly (CIA) machinery. Required for maturation of extramitochondrial Fe-S proteins. The NBP35-CFD1 heterotetramer forms a Fe-S scaffold complex, mediating the de novo assembly of an Fe-S cluster and its transfer to target apoproteins. This is Cytosolic Fe-S cluster assembly factor CFD1 from Chaetomium globosum (strain ATCC 6205 / CBS 148.51 / DSM 1962 / NBRC 6347 / NRRL 1970) (Soil fungus).